The following is a 267-amino-acid chain: Apolipoprotein A-I (267 aa).

An N-terminal signal peptide occupies residues 1–18 (MKAAVLTLAVLFLTGSQA). 2 consecutive repeat copies span residues 68–89 (LKLL…EQLG) and 90–111 (PVTQ…QEMS). The tract at residues 68-267 (LKLLDNWDSV…EEYTKKLNTQ (200 aa)) is 10 X approximate tandem repeats. Met-110 is subject to Methionine sulfoxide. The stretch at 112-122 (KDLEEVKAKVQ) is one 3; half-length repeat. A run of 5 repeats spans residues 123-144 (PYLD…QKVE), 145-166 (PLRA…EKLS), 167-188 (PLGE…THLA), 189-210 (PYSD…ENGG), and 211-232 (ARLA…EKAK). Methionine sulfoxide is present on Met-136. One copy of the 9; half-length repeat lies at 233-243 (PALEDLRQGLL). Repeat 10 spans residues 244–267 (PVLESFKVSFLSALEEYTKKLNTQ).

The protein belongs to the apolipoprotein A1/A4/E family. Homodimer. Interacts with APOA1BP and CLU. Component of a sperm activating protein complex (SPAP), consisting of APOA1, an immunoglobulin heavy chain, an immunoglobulin light chain and albumin. Interacts with NDRG1. Interacts with SCGB3A2. Interacts with NAXE and YJEFN3. Post-translationally, glycosylated. In terms of processing, palmitoylated. Phosphorylation sites are present in the extracellular medium. Major protein of plasma HDL, also found in chylomicrons.

It is found in the secreted. Its function is as follows. Participates in the reverse transport of cholesterol from tissues to the liver for excretion by promoting cholesterol efflux from tissues and by acting as a cofactor for the lecithin cholesterol acyltransferase (LCAT). As part of the SPAP complex, activates spermatozoa motility. The polypeptide is Apolipoprotein A-I (APOA1) (Pan troglodytes (Chimpanzee)).